The chain runs to 943 residues: Isoleucine--tRNA ligase (943 aa).

The 'HIGH' region motif lies at 58–68; sequence PYANGKIHIGH. L-isoleucyl-5'-AMP is bound at residue glutamate 567. Positions 608–612 match the 'KMSKS' region motif; sequence KMSKS. Lysine 611 contacts ATP. Residues cysteine 906, cysteine 909, cysteine 926, and cysteine 929 each contribute to the Zn(2+) site.

It belongs to the class-I aminoacyl-tRNA synthetase family. IleS type 1 subfamily. Monomer. Zn(2+) serves as cofactor.

It is found in the cytoplasm. It carries out the reaction tRNA(Ile) + L-isoleucine + ATP = L-isoleucyl-tRNA(Ile) + AMP + diphosphate. In terms of biological role, catalyzes the attachment of isoleucine to tRNA(Ile). As IleRS can inadvertently accommodate and process structurally similar amino acids such as valine, to avoid such errors it has two additional distinct tRNA(Ile)-dependent editing activities. One activity is designated as 'pretransfer' editing and involves the hydrolysis of activated Val-AMP. The other activity is designated 'posttransfer' editing and involves deacylation of mischarged Val-tRNA(Ile). This Pseudomonas putida (strain GB-1) protein is Isoleucine--tRNA ligase.